Reading from the N-terminus, the 465-residue chain is Cysteine--tRNA ligase (465 aa).

Residue cysteine 29 participates in Zn(2+) binding. Residues 31 to 41 (PTVYNYIHIGN) carry the 'HIGH' region motif. Zn(2+)-binding residues include cysteine 209, histidine 234, and glutamate 238. A 'KMSKS' region motif is present at residues 266-270 (KMSKS). ATP is bound at residue lysine 269. Residue serine 270 is modified to Phosphoserine.

Belongs to the class-I aminoacyl-tRNA synthetase family. Monomer. Zn(2+) is required as a cofactor.

It localises to the cytoplasm. It carries out the reaction tRNA(Cys) + L-cysteine + ATP = L-cysteinyl-tRNA(Cys) + AMP + diphosphate. The chain is Cysteine--tRNA ligase from Bacillus cereus (strain 03BB102).